Here is a 253-residue protein sequence, read N- to C-terminus: MILDAKNLAMPPRLLPVSFTIDAGEIVHFIGPNGSGKSTAISMLSGLFEGQGEITFMGQLLSDYDLPSLARMRCYLSQQDRPAFSVAVYHYLALSLSALNNPRVDHVQHALDEICQALNITDKLNRNIQTLSGGEWQRVRLAAACLQVWPAINPEATLLILDEPAAALDIGQEAAMYKLIRRMAEQGIAVVMANHDLNRTLREADKVLLLNNGSCVVKGSPSDVMTVEQLESTFATQVQRIEHEGRSCLIFND.

One can recognise an ABC transporter domain in the interval 3 to 237 (LDAKNLAMPP…EQLESTFATQ (235 aa)). Residue 31–38 (GPNGSGKS) coordinates ATP.

This sequence belongs to the ABC transporter superfamily. Vitamin B12 importer (TC 3.A.1.13.1) family. As to quaternary structure, the complex is composed of two ATP-binding proteins (BtuD), two transmembrane proteins (BtuC) and a solute-binding protein (BtuF).

It localises to the cell inner membrane. It catalyses the reaction an R-cob(III)alamin(out) + ATP + H2O = an R-cob(III)alamin(in) + ADP + phosphate + H(+). Functionally, part of the ABC transporter complex BtuCDF involved in vitamin B12 import. Responsible for energy coupling to the transport system. The sequence is that of Vitamin B12 import ATP-binding protein BtuD from Photobacterium profundum (strain SS9).